Consider the following 413-residue polypeptide: Eukaryotic initiation factor 4A-14 (413 aa).

The Q motif motif lies at 40 to 68 (DSFDAMGLQENLLRGIYAYGFEKPSAIQQ). The region spanning 71–241 (IVPFCKGLDV…RKFMSKPVRI (171 aa)) is the Helicase ATP-binding domain. ATP is bound at residue 84–91 (AQSGTGKT). Positions 189–192 (DEAD) match the DEAD box motif. Residues 252–413 (GIKQFYVNVD…ELPANVADLL (162 aa)) form the Helicase C-terminal domain.

The protein belongs to the DEAD box helicase family. eIF4A subfamily. As to quaternary structure, eIF4F is a multi-subunit complex, the composition of which varies with external and internal environmental conditions. It is composed of at least EIF4A, EIF4E and EIF4G.

The enzyme catalyses ATP + H2O = ADP + phosphate + H(+). Its function is as follows. ATP-dependent RNA helicase which is a subunit of the eIF4F complex involved in cap recognition and is required for mRNA binding to ribosome. In the current model of translation initiation, eIF4A unwinds RNA secondary structures in the 5'-UTR of mRNAs which is necessary to allow efficient binding of the small ribosomal subunit, and subsequent scanning for the initiator codon. The sequence is that of Eukaryotic initiation factor 4A-14 from Nicotiana tabacum (Common tobacco).